A 349-amino-acid polypeptide reads, in one-letter code: Fructose-1,6-bisphosphatase class 1 (349 aa).

Glu-113, Asp-135, Ile-137, and Asp-138 together coordinate Mg(2+). Residues 138-141 (DGSS), Asn-230, Tyr-258, and Lys-288 contribute to the substrate site. Glu-294 lines the Mg(2+) pocket.

It belongs to the FBPase class 1 family. As to quaternary structure, homotetramer. Mg(2+) is required as a cofactor.

The protein localises to the cytoplasm. The enzyme catalyses beta-D-fructose 1,6-bisphosphate + H2O = beta-D-fructose 6-phosphate + phosphate. It functions in the pathway carbohydrate biosynthesis; Calvin cycle. The sequence is that of Fructose-1,6-bisphosphatase class 1 from Nostoc punctiforme (strain ATCC 29133 / PCC 73102).